Here is a 166-residue protein sequence, read N- to C-terminus: Prorelaxin H1 (166 aa).

A signal peptide spans 1 to 5 (SRAVA). 3 disulfides stabilise this stretch: Cys-16-Cys-153, Cys-28-Cys-166, and Cys-152-Cys-157. Positions 37–139 (SLSQEDAPQT…KYLGLDTHSQ (103 aa)) are cleaved as a propeptide — connecting peptide.

This sequence belongs to the insulin family. In terms of assembly, heterodimer of a B chain and an A chain linked by two disulfide bonds. In terms of tissue distribution, expressed in the corpus luteum of pregnancy but not in the placenta.

The protein resides in the secreted. Functionally, relaxin is an ovarian hormone that acts with estrogen to produce dilatation of the birth canal in many mammals. May be involved in remodeling of connective tissues during pregnancy, promoting growth of pubic ligaments and ripening of the cervix. In Pan troglodytes (Chimpanzee), this protein is Prorelaxin H1 (RNL1).